Consider the following 1179-residue polypeptide: MIKIITGRQSDPLQTEIIGRAARNYLAQPGKDTFIIVPNHIKFNTEVAAIGKVAQLQGREETSVKNLHVLSFSRLAWFFFKKADLLMPESLDDAAATMILEQIIDKRRDELLLFKNSHANSGMIKQVYSTILQVHTGQLDLGNLLERAADPAVALDLDNETRDKLHDLDLIYQDFLEIVSEKHFATKDELNIQLNQLLASRPDLVSQASFYVTDFSHFSIQEKMTMQLLAAFASEMTFAFKTADGSVIEPAAGEYDYVVQKTIKDLTGYFSAHDFAWEREKIASPASPARDLNQAWQGQGQPDLNNLQLVKADSRYAEAYFVARTIYDEVALKGCQYRDFLVLAPNLQEYETYLAPILRQNQIPFFDDLQQQMKYHPLVLLLENLGKLLQQAGDTPALLSIMKTRLLIPDWYLEGDAEAGEAAYLRDIDQLENFALAHGIKYSLWQKPLKDFTKAQVIALDQEQYQKWLDRLDKLRDFFVSKISRLARQLKSEKDSMTAVKLFFDFLVKNGVSARLEAWRLKASESGDLQQAQQPEQCWNLLLSLLKDYLLVNPENFAWADFFKMLTAAFSQANFATIPASLDAVTLSEYGMVQTSGYKQVFIIGAANGSLPQINDQPNFLTTENLASLADFFDQDAYLEDSQQLRNLDQEYQFGNALALASDRVYISYPVINSNNDLLDPSIYYKRLLKLVNGREYRQRDLPDIAEKDRTEFARQLLLFLTSPRASLGYLAYAEENSAQSPLVAKLVELSRQYEEEKAEEIAEGMAYDNNPQDISEDLAERLYGKDLLSSVSQLESYYQNSFEYFLNYGLRLRPRAENELNAIQSGNYFHRTFELLLKEMQKKNIEIDKLSELDLELLLKQVRSEILQEPLYQQFLRDPFNEYLFKVFDKTTSKVAQSYRRKQQENKMRATYGELAFGPAEKLAGLVLPLKKFAGQRKISLRGKIDRVDLFNGDQHVLGQLIDYKSSDHSFNLARFASGVDLQMIAYLDVLEKNRDLLAGGRQFDLLGAFYQYVTRKLNSVNSSSTGALFDSKLQLKENLLGGEDKLKLSGVFVSEPAWYQEVDKALEKKATSSVYRGLKLNKSGGFGKKDNFFSQDEMRELLEYVEALIEDAASEILSGQIALNPFRQGNNTGLAFSDYKDIFYFDQQLPTNSYRDLPNLKKADLLALVEKRLRQRE.

Belongs to the helicase family. AddB/RexB type 2 subfamily. In terms of assembly, heterodimer of AddA and RexB. The cofactor is Mg(2+).

Functionally, the heterodimer acts as both an ATP-dependent DNA helicase and an ATP-dependent, dual-direction single-stranded exonuclease. Recognizes the chi site generating a DNA molecule suitable for the initiation of homologous recombination. This subunit has 5' -&gt; 3' nuclease activity but not helicase activity. The sequence is that of ATP-dependent helicase/deoxyribonuclease subunit B from Lactobacillus delbrueckii subsp. bulgaricus (strain ATCC 11842 / DSM 20081 / BCRC 10696 / JCM 1002 / NBRC 13953 / NCIMB 11778 / NCTC 12712 / WDCM 00102 / Lb 14).